Here is a 460-residue protein sequence, read N- to C-terminus: Spermatogenesis-defective protein 39 homolog (460 aa).

Thr21 carries the post-translational modification Phosphothreonine. A disordered region spans residues 70 to 101; it reads SIKETAGSSGSTSEGREQMKGRNSFYTQLPKP. Positions 73–82 are enriched in low complexity; the sequence is ETAGSSGSTS. Thr115 carries the post-translational modification Phosphothreonine. Residues Ser119, Ser122, and Ser128 each carry the phosphoserine modification. The span at 121–133 shows a compositional bias: polar residues; sequence QSLSDALSDTPAK. Residues 121-141 are disordered; that stretch reads QSLSDALSDTPAKTYSPELGR. At Thr130 the chain carries Phosphothreonine.

It belongs to the SPE39 family. As to quaternary structure, interacts with VPS33B. Associates with the homotypic fusion and vacuole protein sorting (HOPS) complex; impaired by VPS33B. Interacts with RAB11A.

It localises to the cytoplasm. Its subcellular location is the cytoplasmic vesicle. The protein localises to the early endosome. It is found in the recycling endosome. The protein resides in the late endosome. In terms of biological role, proposed to be involved in endosomal maturation implicating in part VPS33B. In epithelial cells, the VPS33B:VIPAS39 complex may play a role in the apical RAB11A-dependent recycling pathway and in the maintenance of the apical-basolateral polarity. May play a role in lysosomal trafficking, probably via association with the core HOPS complex in a discrete population of endosomes; the functions seems to be independent of VPS33B. May play a role in vesicular trafficking during spermatogenesis. May be involved in direct or indirect transcriptional regulation of E-cadherin. This is Spermatogenesis-defective protein 39 homolog (Vipas39) from Rattus norvegicus (Rat).